The following is a 200-amino-acid chain: Putative glucose-6-phosphate isomerase 2 (200 aa).

Fe cation-binding residues include His-92, His-94, Glu-101, and His-140.

It belongs to the archaeal-type GPI family. In terms of assembly, homodimer. The cofactor is Fe cation.

The protein localises to the cytoplasm. It catalyses the reaction alpha-D-glucose 6-phosphate = beta-D-fructose 6-phosphate. The protein operates within carbohydrate degradation; glycolysis; D-glyceraldehyde 3-phosphate and glycerone phosphate from D-glucose: step 2/4. The chain is Putative glucose-6-phosphate isomerase 2 (pgiA2) from Rhizobium meliloti (strain 1021) (Ensifer meliloti).